Reading from the N-terminus, the 177-residue chain is MTLNLAAKKAVVEEVTAVASKAISAVVADYRGLTVNQMTQLRSEARKSGVYLRVVRNTLTRRALKNTEFECLNDLLVGPVFIALSLEAPSDAARLLKDYAKTFEKLEIRALSVGGKVYNANQIDAVASLPTRDEAISKLMYVMKAPIEKFVRTLAEPHAKLARTLAAVKDKKAGNPA.

This sequence belongs to the universal ribosomal protein uL10 family. Part of the ribosomal stalk of the 50S ribosomal subunit. The N-terminus interacts with L11 and the large rRNA to form the base of the stalk. The C-terminus forms an elongated spine to which L12 dimers bind in a sequential fashion forming a multimeric L10(L12)X complex.

Its function is as follows. Forms part of the ribosomal stalk, playing a central role in the interaction of the ribosome with GTP-bound translation factors. The chain is Large ribosomal subunit protein uL10 from Legionella pneumophila (strain Corby).